Here is a 251-residue protein sequence, read N- to C-terminus: Small ribosomal subunit protein uS2 (251 aa).

It belongs to the universal ribosomal protein uS2 family.

The sequence is that of Small ribosomal subunit protein uS2 from Novosphingobium aromaticivorans (strain ATCC 700278 / DSM 12444 / CCUG 56034 / CIP 105152 / NBRC 16084 / F199).